The following is a 147-amino-acid chain: Hemoglobin subunit beta-M (147 aa).

V2 carries the post-translational modification N-acetylvaline. The 145-residue stretch at 3–147 (HLTSEEKNCI…VAHALAHKYH (145 aa)) folds into the Globin domain. T13 carries the post-translational modification Phosphothreonine. S45 is modified (phosphoserine). An N6-acetyllysine modification is found at K60. Residue H64 coordinates heme b. Residue K83 is modified to N6-acetyllysine. H93 is a binding site for heme b. An S-nitrosocysteine modification is found at C94. Position 145 is an N6-acetyllysine (K145).

The protein belongs to the globin family. In terms of assembly, heterotetramer of two alpha chains and two beta chains. As to expression, red blood cells.

In terms of biological role, involved in oxygen transport from the lung to the various peripheral tissues. The protein is Hemoglobin subunit beta-M (HBB) of Didelphis virginiana (North American opossum).